The chain runs to 633 residues: Protein arginine N-methyltransferase 5 (633 aa).

Residues 304-611 form the SAM-dependent MTase PRMT-type domain; it reads LQSPLQPLMD…NNGKKVWYEW (308 aa). Tyr320 provides a ligand contact to S-adenosyl-L-methionine. Phe323 serves as a coordination point for a protein. S-adenosyl-L-methionine contacts are provided by residues 329–330, Glu388, and 414–416; these read KY and GDM. Residues Glu431 and Glu440 each coordinate a protein. Residues Glu431 and Glu440 each act as proton donor/acceptor in the active site. Residue Glu440 coordinates S-adenosyl-L-methionine.

Belongs to the class I-like SAM-binding methyltransferase superfamily. Protein arginine N-methyltransferase family. Heterotetramer; dimer of heterodimer with wdr77. Interacts with wee2-a; this interaction is disrupted upon activation of the DNA replication checkpoint. In terms of tissue distribution, detected in egg (at protein level).

It localises to the cytoplasm. It is found in the nucleus. The protein resides in the cytosol. It carries out the reaction L-arginyl-[protein] + 2 S-adenosyl-L-methionine = N(omega),N(omega)'-dimethyl-L-arginyl-[protein] + 2 S-adenosyl-L-homocysteine + 2 H(+). Functionally, arginine methyltransferase that can both catalyze the formation of omega-N monomethylarginine (MMA) and symmetrical dimethylarginine (sDMA), with a preference for the formation of MMA. Specifically mediates the symmetrical dimethylation of arginine residues in the small nuclear ribonucleoproteins; such methylation being required for the assembly and biogenesis of snRNP core particles. Methylates the arginine in the motif G-R-G-X-G in its substrates histone H2A, H2AX and H4, producing both monomethylated and symmetrically dimethylated 'Arg-3'. Methylates nucleoplasmin at 'Arg-192', producing both monomethylated and symmetrically dimethylated 'Arg-192'. Involved in the DNA replication checkpoint. Promotes entry into mitosis by promoting the proteasomal degradation of wee2-a. May act as a transcriptional corepressor in CRY1-mediated repression of the core circadian component PER1. Involved in spliceosome maturation and mRNA splicing. In Xenopus laevis (African clawed frog), this protein is Protein arginine N-methyltransferase 5 (prmt5).